The chain runs to 521 residues: Solute carrier family 35 member F4 (521 aa).

10 helical membrane passes run 160–180, 192–212, 248–266, 277–297, 301–321, 330–350, 365–385, 395–417, 419–441, and 450–470; these read MVLK…SWVG, FYCP…FFPV, FLKR…NYLY, DVSA…WIVL, FMGV…MMAY, IIGV…KVLF, FVST…VILY, FAAL…NILV, VGVV…PGNA, and VIFN…FLLM. In terms of domain architecture, EamA spans 261-321; sequence LTNYLYLLAL…AITGIVMMAY (61 aa).

The protein belongs to the SLC35F solute transporter family.

Its subcellular location is the membrane. In terms of biological role, putative solute transporter. This is Solute carrier family 35 member F4 (SLC35F4) from Homo sapiens (Human).